The following is a 279-amino-acid chain: HTH-type transcriptional regulator HdfR (279 aa).

An HTH lysR-type domain is found at 1-58 (MDTELLKTFLEVSRTRHFGRAAESLYLTQSAVSFRIRQLENQLGVNLFTRHRNNIRLT). Positions 18 to 37 (FGRAAESLYLTQSAVSFRIR) form a DNA-binding region, H-T-H motif.

The protein belongs to the LysR transcriptional regulatory family.

Functionally, negatively regulates the transcription of the flagellar master operon flhDC by binding to the upstream region of the operon. The polypeptide is HTH-type transcriptional regulator HdfR (Escherichia coli (strain ATCC 8739 / DSM 1576 / NBRC 3972 / NCIMB 8545 / WDCM 00012 / Crooks)).